Here is a 968-residue protein sequence, read N- to C-terminus: RNA polymerase-associated protein RapA (968 aa).

Positions 164–334 (EVGQRHAPRV…FARLRLLDPD (171 aa)) constitute a Helicase ATP-binding domain. 177–184 (DEVGLGKT) contributes to the ATP binding site. The short motif at 280–283 (DEAH) is the DEAH box element. In terms of domain architecture, Helicase C-terminal spans 490 to 644 (RVEWLLNYLV…TCPTGRTIYD (155 aa)).

It belongs to the SNF2/RAD54 helicase family. RapA subfamily. In terms of assembly, interacts with the RNAP. Has a higher affinity for the core RNAP than for the holoenzyme. Its ATPase activity is stimulated by binding to RNAP.

Its function is as follows. Transcription regulator that activates transcription by stimulating RNA polymerase (RNAP) recycling in case of stress conditions such as supercoiled DNA or high salt concentrations. Probably acts by releasing the RNAP, when it is trapped or immobilized on tightly supercoiled DNA. Does not activate transcription on linear DNA. Probably not involved in DNA repair. The sequence is that of RNA polymerase-associated protein RapA from Yersinia pestis bv. Antiqua (strain Antiqua).